The primary structure comprises 120 residues: Large ribosomal subunit protein uL18 (120 aa).

It belongs to the universal ribosomal protein uL18 family. In terms of assembly, part of the 50S ribosomal subunit; part of the 5S rRNA/L5/L18/L25 subcomplex. Contacts the 5S and 23S rRNAs.

Functionally, this is one of the proteins that bind and probably mediate the attachment of the 5S RNA into the large ribosomal subunit, where it forms part of the central protuberance. This chain is Large ribosomal subunit protein uL18, found in Bacillus pumilus (strain SAFR-032).